The chain runs to 196 residues: ATP-dependent Clp protease proteolytic subunit (196 aa).

Catalysis depends on Ser101, which acts as the Nucleophile. His126 is an active-site residue.

This sequence belongs to the peptidase S14 family. Component of the chloroplastic Clp protease core complex.

It localises to the plastid. The protein localises to the chloroplast stroma. The enzyme catalyses Hydrolysis of proteins to small peptides in the presence of ATP and magnesium. alpha-casein is the usual test substrate. In the absence of ATP, only oligopeptides shorter than five residues are hydrolyzed (such as succinyl-Leu-Tyr-|-NHMec, and Leu-Tyr-Leu-|-Tyr-Trp, in which cleavage of the -Tyr-|-Leu- and -Tyr-|-Trp bonds also occurs).. In terms of biological role, cleaves peptides in various proteins in a process that requires ATP hydrolysis. Has a chymotrypsin-like activity. Plays a major role in the degradation of misfolded proteins. The sequence is that of ATP-dependent Clp protease proteolytic subunit from Morus indica (Mulberry).